A 439-amino-acid polypeptide reads, in one-letter code: MPVSRIKVKNRHLKKKAKKPLAFYKPATKFAGAVLIAGTLTTTHELLLQQTSPMVQAATNSTEAFIESIAASAKPVADSNGLYPSVMIAQAILESNWGSSQLSRAPYYNLFGIQGTYQGKSVVFKTQEYLNGKWVTKDMPFRVYPSFNQSFQDNAYVLKTTNFGNGPYYAKAWRANAATYQAATAALTGKYATDPNYGASLNRIISQYNLTRFDGASSAGTSNSGGSTATNTNNNSNTSSTTYTVKSGDTLWGISQKYGISVAQIQSANNLKSTVIYIGQKLVLTTSSSSSNTNSSTSSGNSAGTTTPTTSVTPAKPASQTTIKVKSGDTLWGLSVKYKTTIAQLKSWNHLNSDTIFIGQNLIVSQSAGSSSSSTGSSSASTSSTSNSSAASNTSIHKVVKGDTLWGLSQKSGSPIASIKAWNHLSSDTILIGQYLRIK.

A signal peptide spans 1 to 57; it reads MPVSRIKVKNRHLKKKAKKPLAFYKPATKFAGAVLIAGTLTTTHELLLQQTSPMVQA. Disordered regions lie at residues 218 to 241 and 287 to 320; these read SAGT…TSST and SSSS…PASQ. The LysM 1 domain maps to 241 to 284; it reads TTYTVKSGDTLWGISQKYGISVAQIQSANNLKSTVIYIGQKLVL. Over residues 287–319 the composition is skewed to low complexity; that stretch reads SSSSSNTNSSTSSGNSAGTTTPTTSVTPAKPAS. A LysM 2 domain is found at 321–364; the sequence is TTIKVKSGDTLWGLSVKYKTTIAQLKSWNHLNSDTIFIGQNLIV. A disordered region spans residues 372 to 393; the sequence is SSSTGSSSASTSSTSNSSAASN. The LysM 3 domain maps to 395–438; it reads SIHKVVKGDTLWGLSQKSGSPIASIKAWNHLSSDTILIGQYLRI.

This sequence belongs to the glycosyl hydrolase 73 family.

The protein localises to the secreted. The catalysed reaction is Hydrolysis of (1-&gt;4)-beta-linkages between N-acetylmuramic acid and N-acetyl-D-glucosamine residues in a peptidoglycan and between N-acetyl-D-glucosamine residues in chitodextrins.. Functionally, required for cell separation during growth. This Lactococcus lactis subsp. lactis (strain IL1403) (Streptococcus lactis) protein is Probable N-acetylmuramidase (acmA).